A 259-amino-acid chain; its full sequence is Imidazole glycerol phosphate synthase subunit HisF (259 aa).

Catalysis depends on residues D11 and D130.

The protein belongs to the HisA/HisF family. Heterodimer of HisH and HisF.

Its subcellular location is the cytoplasm. It catalyses the reaction 5-[(5-phospho-1-deoxy-D-ribulos-1-ylimino)methylamino]-1-(5-phospho-beta-D-ribosyl)imidazole-4-carboxamide + L-glutamine = D-erythro-1-(imidazol-4-yl)glycerol 3-phosphate + 5-amino-1-(5-phospho-beta-D-ribosyl)imidazole-4-carboxamide + L-glutamate + H(+). The protein operates within amino-acid biosynthesis; L-histidine biosynthesis; L-histidine from 5-phospho-alpha-D-ribose 1-diphosphate: step 5/9. Functionally, IGPS catalyzes the conversion of PRFAR and glutamine to IGP, AICAR and glutamate. The HisF subunit catalyzes the cyclization activity that produces IGP and AICAR from PRFAR using the ammonia provided by the HisH subunit. The polypeptide is Imidazole glycerol phosphate synthase subunit HisF (Desulfovibrio desulfuricans (strain ATCC 27774 / DSM 6949 / MB)).